We begin with the raw amino-acid sequence, 142 residues long: Large ribosomal subunit protein uL11 (142 aa).

Belongs to the universal ribosomal protein uL11 family. In terms of assembly, part of the ribosomal stalk of the 50S ribosomal subunit. Interacts with L10 and the large rRNA to form the base of the stalk. L10 forms an elongated spine to which L12 dimers bind in a sequential fashion forming a multimeric L10(L12)X complex. Post-translationally, one or more lysine residues are methylated.

Functionally, forms part of the ribosomal stalk which helps the ribosome interact with GTP-bound translation factors. The protein is Large ribosomal subunit protein uL11 of Desulforudis audaxviator (strain MP104C).